The chain runs to 280 residues: Probable endonuclease 4 (280 aa).

Positions 69, 109, 145, 179, 182, 216, 229, 231, and 261 each coordinate Zn(2+).

The protein belongs to the AP endonuclease 2 family. Zn(2+) is required as a cofactor.

It carries out the reaction Endonucleolytic cleavage to 5'-phosphooligonucleotide end-products.. Functionally, endonuclease IV plays a role in DNA repair. It cleaves phosphodiester bonds at apurinic or apyrimidinic (AP) sites, generating a 3'-hydroxyl group and a 5'-terminal sugar phosphate. In Erwinia tasmaniensis (strain DSM 17950 / CFBP 7177 / CIP 109463 / NCPPB 4357 / Et1/99), this protein is Probable endonuclease 4.